The primary structure comprises 298 residues: Probable 3-mercaptopyruvate sulfurtransferase (298 aa).

A Rhodanese 1 domain is found at asparagine 24–threonine 141. The tract at residues glycine 142–proline 175 is hinge. Serine 164 is subject to Phosphoserine. The 117-residue stretch at aspartate 176–serine 292 folds into the Rhodanese 2 domain. Residue arginine 190 coordinates substrate. Catalysis depends on cysteine 252, which acts as the Cysteine persulfide intermediate.

It is found in the mitochondrion. The enzyme catalyses 2-oxo-3-sulfanylpropanoate + [thioredoxin]-dithiol = [thioredoxin]-disulfide + hydrogen sulfide + pyruvate + H(+). Required for formation of the 2-thio group of the 5-methoxycarbonylmethyl-2-thiouridine modified base in some tRNAs. The sequence is that of Probable 3-mercaptopyruvate sulfurtransferase (tum1) from Schizosaccharomyces pombe (strain 972 / ATCC 24843) (Fission yeast).